Here is a 298-residue protein sequence, read N- to C-terminus: Estradiol 17-beta-dehydrogenase 11 (298 aa).

A signal peptide spans 1 to 21 (MKYLLDLILLLPLLIVFCIES). 40–64 (LITGAGHGIGRLTAYEFAKLNTKLV) is a binding site for NADP(+). Serine 172 provides a ligand contact to substrate. Residue tyrosine 185 is the Proton acceptor of the active site.

This sequence belongs to the short-chain dehydrogenases/reductases (SDR) family. 17-beta-HSD 3 subfamily.

Its subcellular location is the endoplasmic reticulum. It is found in the lipid droplet. It carries out the reaction 17beta-estradiol + NAD(+) = estrone + NADH + H(+). The catalysed reaction is 17beta-estradiol + NADP(+) = estrone + NADPH + H(+). Its function is as follows. Can convert androstan-3-alpha,17-beta-diol (3-alpha-diol) to androsterone in vitro, suggesting that it may participate in androgen metabolism during steroidogenesis. May act by metabolizing compounds that stimulate steroid synthesis and/or by generating metabolites that inhibit it. Has no activity toward DHEA (dehydroepiandrosterone), or A-dione (4-androste-3,17-dione), and only a slight activity toward testosterone to A-dione. The polypeptide is Estradiol 17-beta-dehydrogenase 11 (Hsd17b11) (Rattus norvegicus (Rat)).